The primary structure comprises 693 residues: DNA ligase (693 aa).

Residues 43–47, 92–93, and Glu-123 contribute to the NAD(+) site; these read DEEYD and SL. Lys-125 functions as the N6-AMP-lysine intermediate in the catalytic mechanism. NAD(+) contacts are provided by Arg-146, Glu-180, Lys-296, and Lys-320. Positions 414, 417, 433, and 438 each coordinate Zn(2+). The BRCT domain occupies 595–684; sequence VKYDVLKGLT…AKLKGYNFDE (90 aa).

This sequence belongs to the NAD-dependent DNA ligase family. LigA subfamily. Requires Mg(2+) as cofactor. The cofactor is Mn(2+).

It catalyses the reaction NAD(+) + (deoxyribonucleotide)n-3'-hydroxyl + 5'-phospho-(deoxyribonucleotide)m = (deoxyribonucleotide)n+m + AMP + beta-nicotinamide D-nucleotide.. DNA ligase that catalyzes the formation of phosphodiester linkages between 5'-phosphoryl and 3'-hydroxyl groups in double-stranded DNA using NAD as a coenzyme and as the energy source for the reaction. It is essential for DNA replication and repair of damaged DNA. In Thermotoga neapolitana (strain ATCC 49049 / DSM 4359 / NBRC 107923 / NS-E), this protein is DNA ligase.